The following is a 163-amino-acid chain: Small ribosomal subunit protein bS6 (163 aa).

Residues Glu-97–Ala-163 form a disordered region. Positions Arg-122–Ala-163 are enriched in basic and acidic residues.

It belongs to the bacterial ribosomal protein bS6 family.

Its function is as follows. Binds together with bS18 to 16S ribosomal RNA. The chain is Small ribosomal subunit protein bS6 from Rhodospirillum centenum (strain ATCC 51521 / SW).